Consider the following 53-residue polypeptide: Ovomucoid (53 aa).

Residues 3-53 (VDCSEYPQPTCTTEHRPVCGSNNETYGNKCNFCNAVVKSNGTLTVSHFGKC) form the Kazal-like domain. 3 disulfides stabilise this stretch: C5/C35, C13/C32, and C21/C53. An N-linked (GlcNAc...) asparagine glycan is attached at N42.

It is found in the secreted. The sequence is that of Ovomucoid from Polyplectron bicalcaratum (Grey peacock-pheasant).